Reading from the N-terminus, the 77-residue chain is Large ribosomal subunit protein uL24 (77 aa).

The protein belongs to the universal ribosomal protein uL24 family. As to quaternary structure, part of the 50S ribosomal subunit.

One of two assembly initiator proteins, it binds directly to the 5'-end of the 23S rRNA, where it nucleates assembly of the 50S subunit. Its function is as follows. One of the proteins that surrounds the polypeptide exit tunnel on the outside of the subunit. This Campylobacter jejuni subsp. jejuni serotype O:6 (strain 81116 / NCTC 11828) protein is Large ribosomal subunit protein uL24.